An 834-amino-acid chain; its full sequence is ATP-dependent 6-phosphofructokinase (834 aa).

The interval 1 to 426 (MTTTSKIIND…FYEIFIACSN (426 aa)) is N-terminal catalytic PFK domain 1. Residues glycine 62, 123 to 124 (RS), and 153 to 156 (GDGS) each bind ATP. Aspartate 154 is a binding site for Mg(2+). Residues 199-201 (SID), arginine 236, 243-245 (MGR), glutamate 299, arginine 326, and 332-335 (HVQR) contribute to the substrate site. Residue aspartate 201 is the Proton acceptor of the active site. The segment at 427–437 (LHRRKVESKGM) is interdomain linker. Positions 438–834 (GVLILHSGGP…DPNVNPQFTL (397 aa)) are C-terminal regulatory PFK domain 2. Residues arginine 507, 566–570 (TIANN), arginine 603, 610–612 (MGA), glutamate 666, arginine 692, 698–701 (HLQQ), and arginine 764 each bind beta-D-fructose 2,6-bisphosphate. The disordered stretch occupies residues 799-834 (SNLSEQDRPIKKSDISSPTSYSQKTFDPNVNPQFTL). Over residues 803–812 (EQDRPIKKSD) the composition is skewed to basic and acidic residues. The span at 813 to 834 (ISSPTSYSQKTFDPNVNPQFTL) shows a compositional bias: polar residues.

Belongs to the phosphofructokinase type A (PFKA) family. ATP-dependent PFK group I subfamily. Eukaryotic two domain clade 'E' sub-subfamily. In terms of assembly, homotetramer. Mg(2+) serves as cofactor. In terms of processing, the N-terminus is blocked.

It localises to the cytoplasm. The enzyme catalyses beta-D-fructose 6-phosphate + ATP = beta-D-fructose 1,6-bisphosphate + ADP + H(+). It functions in the pathway carbohydrate degradation; glycolysis; D-glyceraldehyde 3-phosphate and glycerone phosphate from D-glucose: step 3/4. Its activity is regulated as follows. Allosterically activated by ADP, AMP, or fructose 2,6-bisphosphate, and allosterically inhibited by ATP or citrate. Its function is as follows. Catalyzes the phosphorylation of D-fructose 6-phosphate to fructose 1,6-bisphosphate by ATP, the first committing step of glycolysis. The sequence is that of ATP-dependent 6-phosphofructokinase (pfkA) from Dictyostelium discoideum (Social amoeba).